Here is a 214-residue protein sequence, read N- to C-terminus: Phosphatidylserine decarboxylase proenzyme (214 aa).

Serine 182 acts as the Schiff-base intermediate with substrate; via pyruvic acid in catalysis. Position 182 is a pyruvic acid (Ser); by autocatalysis (serine 182).

It belongs to the phosphatidylserine decarboxylase family. PSD-A subfamily. In terms of assembly, heterodimer of a large membrane-associated beta subunit and a small pyruvoyl-containing alpha subunit. Requires pyruvate as cofactor. Is synthesized initially as an inactive proenzyme. Formation of the active enzyme involves a self-maturation process in which the active site pyruvoyl group is generated from an internal serine residue via an autocatalytic post-translational modification. Two non-identical subunits are generated from the proenzyme in this reaction, and the pyruvate is formed at the N-terminus of the alpha chain, which is derived from the carboxyl end of the proenzyme. The post-translation cleavage follows an unusual pathway, termed non-hydrolytic serinolysis, in which the side chain hydroxyl group of the serine supplies its oxygen atom to form the C-terminus of the beta chain, while the remainder of the serine residue undergoes an oxidative deamination to produce ammonia and the pyruvoyl prosthetic group on the alpha chain.

The protein localises to the cell membrane. The enzyme catalyses a 1,2-diacyl-sn-glycero-3-phospho-L-serine + H(+) = a 1,2-diacyl-sn-glycero-3-phosphoethanolamine + CO2. The protein operates within phospholipid metabolism; phosphatidylethanolamine biosynthesis; phosphatidylethanolamine from CDP-diacylglycerol: step 2/2. Catalyzes the formation of phosphatidylethanolamine (PtdEtn) from phosphatidylserine (PtdSer). The protein is Phosphatidylserine decarboxylase proenzyme of Burkholderia vietnamiensis (strain G4 / LMG 22486) (Burkholderia cepacia (strain R1808)).